Consider the following 346-residue polypeptide: Putative aquaporin-7B (346 aa).

At 1–40 (MVQASGHRRSTRGSKMVSWSVIAKIQEIWCEEDERKMVRE) the chain is on the cytoplasmic side. Residues 41–58 (FLAEFMSTYVMMVFGLGS) traverse the membrane as a helical segment. Over 59–71 (VAHMVLNKTYGSY) the chain is Extracellular. Residues 72–89 (LGVNLGFGFGVTMGVHVA) traverse the membrane as a helical segment. Topologically, residues 90 to 93 (GRIS) are cytoplasmic. The discontinuously helical intramembrane region spans 94-107 (GAHMNAAVTFTNCA). An NPA 1 motif is present at residues 98–100 (NAA). Over 108–115 (LGRVPWRK) the chain is Cytoplasmic. A helical membrane pass occupies residues 116 to 136 (FPVHVLGQFLGSFLAAATIYS). Topologically, residues 137–174 (LFYTAILHFSGGELMVTGPFATAGIFATYLPDHMTLWR) are extracellular. The helical transmembrane segment at 175 to 192 (GFLNEEWLTRMLQLCLFT) threads the bilayer. The Cytoplasmic segment spans residues 193 to 204 (ITDQENNPALPG). Residues 205–221 (THALVISILVVIIRVSH) form a helical membrane-spanning segment. Residues 222–225 (GINT) are Extracellular-facing. An intramembrane region (discontinuously helical) is located at residues 226 to 239 (GYAINPSRDPPPSI). Positions 230–232 (NPS) match the NPA 2 motif. At 240–257 (FTFIAGWGKQVFSDGENW) the chain is on the extracellular side. The helical transmembrane segment at 258–279 (WWVPVVAPLLGASLGGIIYLVF) threads the bilayer. Residues 280–346 (IGSTIPREPL…LHESMALEHF (67 aa)) are Cytoplasmic-facing.

The protein belongs to the MIP/aquaporin (TC 1.A.8) family. In terms of assembly, homotetramer; each monomer provides an independent glycerol/water pore.

Its subcellular location is the membrane. The catalysed reaction is glycerol(in) = glycerol(out). It carries out the reaction H2O(in) = H2O(out). Aquaglyceroporins form homotetrameric transmembrane channels, with each monomer independently mediating glycerol and water transport across the plasma membrane along their osmotic gradient. This chain is Putative aquaporin-7B, found in Homo sapiens (Human).